Consider the following 238-residue polypeptide: Ribosomal RNA small subunit methyltransferase G (238 aa).

S-adenosyl-L-methionine is bound by residues G77, F82, 128-129, and R147; that span reads AE.

The protein belongs to the methyltransferase superfamily. RNA methyltransferase RsmG family.

Its subcellular location is the cytoplasm. Functionally, specifically methylates the N7 position of guanine in position 535 of 16S rRNA. The chain is Ribosomal RNA small subunit methyltransferase G from Brevibacillus brevis (strain 47 / JCM 6285 / NBRC 100599).